The chain runs to 256 residues: MAGHSKFKNIQHRKGAQDKKRAKVFTKLIREIVTAVKAGSTNPDNNPRLRTALATARSQNLPKERIDKAINSANDSANNENYTEIRYEGYAPGGIAIIVEALTDNKNRTAAEVRSSFTKYGGNLGETGSVNFLFKHCGVIQYPLEISSAENILETAIEAGADDIVSDEVLHTIYTDIENFSKVLEFLTDKYGTAEEAYIGWVPLNTIIIDDKEKAEKLLKLVDLLEESDDVQRVFGNYELSDEIYEILQGSEIICK.

The segment at 1–21 (MAGHSKFKNIQHRKGAQDKKR) is disordered.

It belongs to the TACO1 family.

The protein localises to the cytoplasm. This is Probable transcriptional regulatory protein A1I_03240 from Rickettsia bellii (strain OSU 85-389).